The primary structure comprises 427 residues: Adenylosuccinate synthetase (427 aa).

Residues 12-18 (GDEGKGK) and 40-42 (GHT) contribute to the GTP site. Residue Asp-13 is the Proton acceptor of the active site. Mg(2+)-binding residues include Asp-13 and Gly-40. Residues 13–16 (DEGK), 38–41 (NAGH), Thr-131, Arg-145, Gln-226, Thr-241, and Arg-305 contribute to the IMP site. His-41 functions as the Proton donor in the catalytic mechanism. Substrate is bound at residue 301 to 307 (ATTGRKR). GTP is bound by residues Arg-307, 333–335 (KLD), and 415–417 (SVG).

It belongs to the adenylosuccinate synthetase family. In terms of assembly, homodimer. Mg(2+) is required as a cofactor.

Its subcellular location is the cytoplasm. It catalyses the reaction IMP + L-aspartate + GTP = N(6)-(1,2-dicarboxyethyl)-AMP + GDP + phosphate + 2 H(+). Its pathway is purine metabolism; AMP biosynthesis via de novo pathway; AMP from IMP: step 1/2. Plays an important role in the de novo pathway of purine nucleotide biosynthesis. Catalyzes the first committed step in the biosynthesis of AMP from IMP. The chain is Adenylosuccinate synthetase from Oleidesulfovibrio alaskensis (strain ATCC BAA-1058 / DSM 17464 / G20) (Desulfovibrio alaskensis).